Consider the following 82-residue polypeptide: Toxin Tpa7 (82 aa).

The signal sequence occupies residues 1-20 (MKGMILLISCLMLIEVVVEC). An LCN-type CS-alpha/beta domain is found at 21–82 (KEGYPLDTLN…KIWDLKKNKC (62 aa)). Disulfide bonds link Cys32/Cys82, Cys36/Cys58, Cys44/Cys63, and Cys48/Cys65.

It belongs to the long (4 C-C) scorpion toxin superfamily. Sodium channel inhibitor family. Beta subfamily. In terms of tissue distribution, expressed by the venom gland.

Its subcellular location is the secreted. Beta toxins bind voltage-independently at site-4 of sodium channels (Nav) and shift the voltage of activation toward more negative potentials thereby affecting sodium channel activation and promoting spontaneous and repetitive firing. In Tityus pachyurus (Colombian scorpion), this protein is Toxin Tpa7.